The sequence spans 443 residues: uncharacterized protein (443 aa).

4 helical membrane passes run Ile15 to Ala35, Leu38 to Ser58, Ala59 to Leu79, and Val181 to Leu201. Positions Asn231–Thr270 are 4 X 10 AA approximate repeats.

Belongs to the mycobacterial PPE family.

The protein resides in the cell membrane. This is an uncharacterized protein from Mycobacterium tuberculosis (strain ATCC 25618 / H37Rv).